The chain runs to 132 residues: Small ribosomal subunit protein uS8c (132 aa).

This sequence belongs to the universal ribosomal protein uS8 family. Part of the 30S ribosomal subunit.

Its subcellular location is the plastid. It is found in the chloroplast. One of the primary rRNA binding proteins, it binds directly to 16S rRNA central domain where it helps coordinate assembly of the platform of the 30S subunit. The sequence is that of Small ribosomal subunit protein uS8c (rps8) from Nymphaea alba (White water-lily).